The following is a 234-amino-acid chain: Riboflavin kinase (234 aa).

Positions 1-98 (MAESTTAVGH…QEIFGDNSSV (98 aa)) are H-T-H motif-like. Residues 99–234 (VELTGTVTSG…RITVQLKPKE (136 aa)) are riboflavin kinase. Residue 108-113 (GMGEGR) participates in CDP binding. The Mg(2+) site is built by Thr137 and Asn139. Positions 199 and 207 each coordinate FMN. Residue 212–215 (ERLR) participates in CDP binding.

Belongs to the archaeal riboflavin kinase family. Requires Mg(2+) as cofactor.

The enzyme catalyses riboflavin + CTP = CDP + FMN + H(+). It functions in the pathway cofactor biosynthesis; FMN biosynthesis; FMN from riboflavin (CTP route): step 1/1. In terms of biological role, catalyzes the CTP-dependent phosphorylation of riboflavin (vitamin B2) to form flavin mononucleotide (FMN). This Haloquadratum walsbyi (strain DSM 16790 / HBSQ001) protein is Riboflavin kinase (ribK).